The chain runs to 362 residues: Heme A synthase (362 aa).

A run of 5 helical transmembrane segments spans residues 10 to 30, 102 to 122, 128 to 148, 159 to 179, and 198 to 218; these read LAAI…MVLV, VIGM…AVSG, LWLI…MVAS, VRLA…VWTL, and AWGL…VAGL. Residue H262 coordinates heme. Helical transmembrane passes span 266 to 286, 297 to 317, and 318 to 338; these read AYTL…AGAG, LAAI…VVPI, and SLAL…VLQA. H323 contacts heme.

The protein belongs to the COX15/CtaA family. Type 2 subfamily. As to quaternary structure, interacts with CtaB. The cofactor is heme b.

Its subcellular location is the cell membrane. It carries out the reaction Fe(II)-heme o + 2 A + H2O = Fe(II)-heme a + 2 AH2. It functions in the pathway porphyrin-containing compound metabolism; heme A biosynthesis; heme A from heme O: step 1/1. Its function is as follows. Catalyzes the conversion of heme O to heme A by two successive hydroxylations of the methyl group at C8. The first hydroxylation forms heme I, the second hydroxylation results in an unstable dihydroxymethyl group, which spontaneously dehydrates, resulting in the formyl group of heme A. The polypeptide is Heme A synthase (Bradyrhizobium sp. (strain BTAi1 / ATCC BAA-1182)).